The primary structure comprises 451 residues: POC1 centriolar protein homolog B (451 aa).

WD repeat units lie at residues 16–55 (GHKAAITSLDLSPNGKQLATASWDTFLMLWNFKPHARAYR), 58–99 (GHKD…SEFK), 101–139 (HTAPVRSVDFSADGQFLATASEDKSIKVWSMYRQRFLYS), 142–181 (RHTHWVRCAKFSPDGRLIVSCSEDKTIKIWDTTNKQCVNN), 183–223 (SDSV…LLQH), 226–265 (VHSGGVNCISFHPSDNYLVTASSDGTLKILDLLEGRLIYT), and 268–307 (GHTGPVFTVSFSKGGELFASGGADTQVLLWRTNFDELHCK). Position 321 is a phosphoserine (S321). The tract at residues 372-394 (PECSPTTTKKKTEDMSDLPSESQ) is disordered. Positions 404 to 443 (ALEHIMEQLNVLTQTVSILEQRLTLTEDKLKDCLENQQKL) form a coiled coil.

Belongs to the WD repeat POC1 family. In terms of assembly, interacts with POC1A. Interacts with FAM161A. Interacts with CEP44; the interaction is direct and recruits POC1B to centriolar microtubules. Forms a microtubule-associated complex with POC5, CETN2 and FAM161A. Interacts with CCDC15. In terms of processing, phosphorylated in mitotic cells that may be mediated by CDK1.

Its subcellular location is the cytoplasm. The protein resides in the cytoskeleton. It is found in the microtubule organizing center. It localises to the centrosome. The protein localises to the centriole. Its subcellular location is the cilium basal body. The protein resides in the spindle pole. Plays an important role in centriole assembly and/or stability and ciliogenesis. Involved in early steps of centriole duplication, as well as in the later steps of centriole length control. Acts in concert with POC1A to ensure centriole integrity and proper mitotic spindle formation. Required for primary cilia formation, ciliary length and also cell proliferation. Required for retinal integrity. Acts as a positive regulator of centriole elongation. This chain is POC1 centriolar protein homolog B (POC1B), found in Pongo abelii (Sumatran orangutan).